The sequence spans 476 residues: Ribulose bisphosphate carboxylase/oxygenase activase 1, chloroplastic (476 aa).

Residues 1-56 (MAAAYSTVGAVNRAPLSLNGSGARASLVPSTAFFGSSLKKSAAKFPKASSGNFKIV) constitute a chloroplast transit peptide. 165–172 (GGKGQGKS) is a binding site for ATP.

This sequence belongs to the RuBisCO activase family.

It is found in the plastid. It localises to the chloroplast stroma. Its function is as follows. Activation of RuBisCO (ribulose-1,5-bisphosphate carboxylase/oxygenase; EC 4.1.1.39) involves the ATP-dependent carboxylation of the epsilon-amino group of lysine leading to a carbamate structure. This chain is Ribulose bisphosphate carboxylase/oxygenase activase 1, chloroplastic (RCA1), found in Larrea tridentata (Creosote bush).